A 924-amino-acid polypeptide reads, in one-letter code: DNA repair and recombination protein RDH54 (924 aa).

The segment covering 1–10 has biased composition (basic and acidic residues); it reads MQIPKYENKP. Disordered regions lie at residues 1–21 and 155–183; these read MQIP…GSNK and EALS…NDGG. Low complexity predominate over residues 168–178; the sequence is TTSTTETVPST. The 189-residue stretch at 299–487 folds into the Helicase ATP-binding domain; that stretch reads LENDSDISGC…FTIIDFINPG (189 aa). Residue 346–353 coordinates ATP; the sequence is IPLTGLCK. The DEGH box motif lies at 472 to 475; it reads NDLN. Lys-615 is covalently cross-linked (Glycyl lysine isopeptide (Lys-Gly) (interchain with G-Cter in ubiquitin)). The 160-residue stretch at 631-790 folds into the Helicase C-terminal domain; that stretch reads KLRVLMTLLE…DSEMRNKESS (160 aa).

It belongs to the SNF2/RAD54 helicase family. In terms of assembly, interacts with RAD51 and DMC1.

The protein resides in the nucleus. The enzyme catalyses ATP + H2O = ADP + phosphate + H(+). Functionally, involved in the recombinational repair of double-strand breaks (DSB) in DNA during mitosis and meiosis. Has DNA dependent ATPase activity. Promotes D-loop (displacement loop) formation with RAD51 recombinase. Modifies the topology of double-stranded DNA during the D-loop reaction to facilitate the invasion of the homologous duplex molecule by the initiating single-stranded DNA substrate. Required for adaptation from G2/M checkpoint arrest induced by a double strand break, by participating in monitoring the extent of single-stranded DNA produced by resection of DNA ends. This role is distinct from its roles in recombination. Promotes colocalization of RAD51 and DMC1 during meiotic recombination. Involved in crossover interference. This chain is DNA repair and recombination protein RDH54 (RDH54), found in Saccharomyces cerevisiae (strain YJM789) (Baker's yeast).